A 64-amino-acid polypeptide reads, in one-letter code: Small ribosomal subunit protein eS17 (64 aa).

It belongs to the eukaryotic ribosomal protein eS17 family.

The chain is Small ribosomal subunit protein eS17 from Methanospirillum hungatei JF-1 (strain ATCC 27890 / DSM 864 / NBRC 100397 / JF-1).